The following is an 899-amino-acid chain: Periodic tryptophan protein 2 homolog (899 aa).

WD repeat units follow at residues 9–52 (NLLG…TLPF), 53–92 (SHRKNIARIGLTPQGNLLLSIDEDGQAILTNVPRRVVLYH), 94–132 (SFKAPVTALSFSPSGRHFIVGLGRKIEVWHVPSTPDANA), 149–188 (QHFDDVRHIEWSHDSRFFLTSSKDLTARIWSVDQEEGFTP), 193–232 (GHRQGVVGAWFSKDQETIYTVSKDGAVFDWQYVAKPGQDE), 252–291 (QNSATVRCAAFHPESNLLVAGFSNGIFGLYEMPDFNMIHT), 294–334 (ISQN…YILK), 337–376 (GHFDSMNSLVYSPDGQRIVTVADDGKIKVWDTESGFCIVT), 379–418 (EHTSGITACEFSKKGNVLFTSSLDGSIRAWDLIRYRNFRT), 422–464 (PERL…DRLS), 465–504 (GHEGPVSSLAFAPNGGLLVSGSWDRTARIWSIFNRTQTSE), 507–546 (QLNSDVLDIAFRPDSLQIAISTLDGNLSFWSVSEAEQQAG), and 569–608 (AGTKAFNTIRYSTDGSCLLAGGNSKYICLYSVTTMVLLKK). The interval 639–668 (DEQGEASDFEDRIDRSLPGSKRGDPSARRK) is disordered. Residues 647-668 (FEDRIDRSLPGSKRGDPSARRK) are compositionally biased toward basic and acidic residues. Residues 669–709 (NPEVRVNGVAFSPNGSAFCAASTEGLLIYSLDTTIQFDPFD) form a WD 14 repeat. A disordered region spans residues 866–899 (TGSDEQPGAGGMSLNDVMQQDEGNASEDEWIGLV). Residues 889–899 (NASEDEWIGLV) are compositionally biased toward acidic residues.

This sequence belongs to the WD repeat PWP2 family.

This is Periodic tryptophan protein 2 homolog from Neurospora crassa (strain ATCC 24698 / 74-OR23-1A / CBS 708.71 / DSM 1257 / FGSC 987).